We begin with the raw amino-acid sequence, 91 residues long: uncharacterized protein (91 aa).

Transmembrane regions (helical) follow at residues 6–26, 37–57, and 68–88; these read AAAVFSITIPIISAILIINFF, MPVFFPLLLSPIGIILAFVSI, and IVLNAIMFPFPFFWFIGGALL.

It localises to the cell membrane. This is an uncharacterized protein from Bacillus subtilis (strain 168).